The following is a 426-amino-acid chain: Enolase (426 aa).

Glutamine 163 contacts (2R)-2-phosphoglycerate. Catalysis depends on glutamate 205, which acts as the Proton donor. Residues aspartate 242, glutamate 285, and aspartate 312 each contribute to the Mg(2+) site. (2R)-2-phosphoglycerate contacts are provided by lysine 337, arginine 366, serine 367, and lysine 388. Residue lysine 337 is the Proton acceptor of the active site.

It belongs to the enolase family. In terms of assembly, component of the RNA degradosome, a multiprotein complex involved in RNA processing and mRNA degradation. It depends on Mg(2+) as a cofactor.

The protein resides in the cytoplasm. It localises to the secreted. It is found in the cell surface. The enzyme catalyses (2R)-2-phosphoglycerate = phosphoenolpyruvate + H2O. The protein operates within carbohydrate degradation; glycolysis; pyruvate from D-glyceraldehyde 3-phosphate: step 4/5. Its function is as follows. Catalyzes the reversible conversion of 2-phosphoglycerate (2-PG) into phosphoenolpyruvate (PEP). It is essential for the degradation of carbohydrates via glycolysis. This Nitrosococcus oceani (strain ATCC 19707 / BCRC 17464 / JCM 30415 / NCIMB 11848 / C-107) protein is Enolase.